A 212-amino-acid chain; its full sequence is Large ribosomal subunit protein uL3 (212 aa).

Residues 135 to 156 (MTHGNSRSHRVPGSIGQNQSPG) are disordered. N5-methylglutamine is present on Q153.

It belongs to the universal ribosomal protein uL3 family. As to quaternary structure, part of the 50S ribosomal subunit. Forms a cluster with proteins L14 and L19. In terms of processing, methylated by PrmB.

Functionally, one of the primary rRNA binding proteins, it binds directly near the 3'-end of the 23S rRNA, where it nucleates assembly of the 50S subunit. This Tolumonas auensis (strain DSM 9187 / NBRC 110442 / TA 4) protein is Large ribosomal subunit protein uL3.